The following is a 141-amino-acid chain: Hemoglobin subunit alpha-1/2 (141 aa).

A Globin domain is found at 1-141 (VLSPADKTNV…VSTVLTSKYR (141 aa)). Serine 3 is modified (phosphoserine). At lysine 7 the chain carries N6-succinyllysine. Residue threonine 8 is modified to Phosphothreonine. At lysine 11 the chain carries N6-succinyllysine. Residue lysine 16 is modified to N6-acetyllysine; alternate. The residue at position 16 (lysine 16) is an N6-succinyllysine; alternate. Residue tyrosine 24 is modified to Phosphotyrosine. Serine 35 carries the post-translational modification Phosphoserine. The residue at position 40 (lysine 40) is an N6-succinyllysine. Serine 49 carries the phosphoserine modification. Position 58 (histidine 58) interacts with O2. A heme b-binding site is contributed by histidine 87. At serine 102 the chain carries Phosphoserine. Phosphothreonine is present on threonine 108. 2 positions are modified to phosphoserine: serine 124 and serine 131. Phosphothreonine occurs at positions 134 and 137. Serine 138 carries the phosphoserine modification.

It belongs to the globin family. In terms of assembly, heterotetramer of two alpha chains and two beta chains. As to expression, red blood cells.

Its function is as follows. Involved in oxygen transport from the lung to the various peripheral tissues. The chain is Hemoglobin subunit alpha-1/2 from Macaca speciosa (Stump-tail macaque).